The primary structure comprises 401 residues: Imidazolonepropionase (401 aa).

Fe(3+) is bound by residues H70 and H72. 2 residues coordinate Zn(2+): H70 and H72. 3 residues coordinate 4-imidazolone-5-propanoate: R79, Y142, and H175. Residue Y142 participates in N-formimidoyl-L-glutamate binding. A Fe(3+)-binding site is contributed by H240. A Zn(2+)-binding site is contributed by H240. Q243 serves as a coordination point for 4-imidazolone-5-propanoate. D315 is a binding site for Fe(3+). D315 contacts Zn(2+). Residues N317 and G319 each contribute to the N-formimidoyl-L-glutamate site. S320 contacts 4-imidazolone-5-propanoate.

The protein belongs to the metallo-dependent hydrolases superfamily. HutI family. It depends on Zn(2+) as a cofactor. The cofactor is Fe(3+).

It is found in the cytoplasm. The enzyme catalyses 4-imidazolone-5-propanoate + H2O = N-formimidoyl-L-glutamate. Its pathway is amino-acid degradation; L-histidine degradation into L-glutamate; N-formimidoyl-L-glutamate from L-histidine: step 3/3. Functionally, catalyzes the hydrolytic cleavage of the carbon-nitrogen bond in imidazolone-5-propanoate to yield N-formimidoyl-L-glutamate. It is the third step in the universal histidine degradation pathway. This Ruegeria pomeroyi (strain ATCC 700808 / DSM 15171 / DSS-3) (Silicibacter pomeroyi) protein is Imidazolonepropionase.